The sequence spans 310 residues: MAGNSQRRGAIRKSGTKKGTSVGSGGQRRRGLEGRGPTPSAHMRPNHPAAKRAKAQQRRPARGRTDETETVLGRNPVLECLRAGVPSTALYVALGVEADERLTESVSRAADSGIPILEVPRTDLDRMTANHLHQGIALQVPPYNYAHPDDLLAAALDTPPALLVALDNISDPRNLGAIVRSVAAFGGHGVLIPQRRSASVTAVAWRTSAGAAARMPVARATNLTRALKDWADRGVRVVGLDAGGDTAIDDLDGSDPIVVVVGSEGKGLSRLVRQTCDEVVSVPMAGPTESLNASVAAGVVLAEIARQRRT.

Residues 1-70 (MAGNSQRRGA…ARGRTDETET (70 aa)) form a disordered region. The span at 49 to 62 (AAKRAKAQQRRPAR) shows a compositional bias: basic residues. Positions 262, 282, and 291 each coordinate S-adenosyl-L-methionine.

Belongs to the class IV-like SAM-binding methyltransferase superfamily. RNA methyltransferase TrmH family.

This is an uncharacterized protein from Mycobacterium ulcerans (strain Agy99).